Here is a 157-residue protein sequence, read N- to C-terminus: Ribosome maturation factor RimP (157 aa).

Belongs to the RimP family.

The protein localises to the cytoplasm. Required for maturation of 30S ribosomal subunits. This Bacillus pumilus (strain SAFR-032) protein is Ribosome maturation factor RimP.